We begin with the raw amino-acid sequence, 910 residues long: Short transient receptor potential channel 3 (910 aa).

The tract at residues 1–93 (MSTKVKKCRE…VRGPAFMFGA (93 aa)) is disordered. Residues 1 to 448 (MSTKVKKCRE…KILRSPFMKF (448 aa)) are Cytoplasmic-facing. Positions 19–29 (PEEEEDGEAEG) are enriched in acidic residues. Pro residues predominate over residues 48 to 58 (PPCPRAPPSPG). Residues 59–68 (PDASSEGSPS) show a composition bias toward low complexity. ANK repeat units lie at residues 100 to 129 (AEEE…TLNV), 135 to 164 (MGQN…LARI), 166 to 192 (DALL…FAAS), and 221 to 250 (PDIT…RIER). E147 lines the Ca(2+) pocket. A helical membrane pass occupies residues 449 to 466 (VAHAASFIIFLGLLVFNA). Over 467-497 (SDRFEGITTLPNITVIDYPKQIFRVKTTQFT) the chain is Extracellular. A glycan (N-linked (GlcNAc...) asparagine) is linked at N478. A helical transmembrane segment spans residues 498–516 (WTEMLIMVWVLGMMWSECK). 3 residues coordinate Ca(2+): E514, E517, and N532. The Cytoplasmic segment spans residues 517-529 (ELWLEGPREYIVQ). Residues 530 to 551 (LWNVLDFGMLSIFIAAFTARFL) form a helical membrane-spanning segment. The Extracellular portion of the chain corresponds to 552–595 (AFLQATKAQQYVDSHVQESDLSEVTLPPEVQYFTYARDKWLPSD). A helical membrane pass occupies residues 596–619 (PQIISEGLYAIAVVLSFSRIAYIL). At 620–638 (PANESFGPLQISLGRTVKD) the chain is on the cytoplasmic side. Residues 623–652 (ESFGPLQISLGRTVKDIFKFMVLFIMVFLA) form an ANK 5 repeat. Residues 639–662 (IFKFMVLFIMVFLAFMIGMFILYS) traverse the membrane as a helical segment. Residues 663–702 (YYLGAKVNPAFTTVEESFKTLFWSIFGLSEVTSVVLKYDH) lie on the Extracellular side of the membrane. The helical transmembrane segment at 703–728 (KFIENIGYVLYGIYNVTMVVVLLNML) threads the bilayer. Residues 729–910 (IAMINSSYQE…KLNPSVLRCE (182 aa)) lie on the Cytoplasmic side of the membrane. Residues E860, E863, E865, and D872 each coordinate Ca(2+).

Belongs to the transient receptor (TC 1.A.4) family. STrpC subfamily. TRPC3 sub-subfamily. In terms of assembly, homotetramer. Interacts with ITPR1, ITPR3, MX1 and RNF24. Interacts with JPH2; the interaction is involved in maintaining Ca(2+) homeostasis in skeletal muscle and is mediated by JPH2 'Ser-165' phosphorylation. Abundantly expressed in brain. Concentrated in cerebellar Purkinje cells and sparsely localized in cerebellar granule lyer, pontine nuclei and thalamus. Lower levels detected in other tissues.

It localises to the cell membrane. The enzyme catalyses Ca(2+)(in) = Ca(2+)(out). Its activity is regulated as follows. Activated by diacylglycerol (DAG) in a membrane-delimited fashion, independently of protein kinase C. Activated by inositol 1,4,5-triphosphate receptors (ITPR) with bound IP3. May be activated by internal calcium store depletion. Inhibited by intracellular Ca(2+). Forms a receptor-activated non-selective calcium permeant cation channel. May be operated by a phosphatidylinositol second messenger system activated by receptor tyrosine kinases or G-protein coupled receptors. The chain is Short transient receptor potential channel 3 (Trpc3) from Mus musculus (Mouse).